An 87-amino-acid chain; its full sequence is uncharacterized protein (87 aa).

The interval 67–87 is disordered; that stretch reads TGGDPREAVVRPADQVEGYTG.

This is an uncharacterized protein from Mycobacterium bovis (strain ATCC BAA-935 / AF2122/97).